Reading from the N-terminus, the 253-residue chain is LexA repressor (253 aa).

The tract at residues 1–34 (MAIEKKPAGARGSRGSRTVKTLPNGKPDPASLSD) is disordered. Residues 56 to 76 (IREIGDAAGLQSTSSVAYQLK) constitute a DNA-binding region (H-T-H motif). Positions 82–106 (GFLRRDPNKPRAVDVRHLPETESRS) are enriched in basic and acidic residues. A disordered region spans residues 82-127 (GFLRRDPNKPRAVDVRHLPETESRSSKAATQAKSKAPQAGAHDPEL). Residues 107 to 120 (SKAATQAKSKAPQA) are compositionally biased toward low complexity. Catalysis depends on for autocatalytic cleavage activity residues Ser-177 and Lys-214.

The protein belongs to the peptidase S24 family. As to quaternary structure, homodimer.

The catalysed reaction is Hydrolysis of Ala-|-Gly bond in repressor LexA.. Its function is as follows. Represses a number of genes involved in the response to DNA damage (SOS response), including recA and lexA. In the presence of single-stranded DNA, RecA interacts with LexA causing an autocatalytic cleavage which disrupts the DNA-binding part of LexA, leading to derepression of the SOS regulon and eventually DNA repair. This Corynebacterium glutamicum (strain R) protein is LexA repressor.